The following is a 476-amino-acid chain: Aspartyl/glutamyl-tRNA(Asn/Gln) amidotransferase subunit B (476 aa).

It belongs to the GatB/GatE family. GatB subfamily. In terms of assembly, heterotrimer of A, B and C subunits.

It carries out the reaction L-glutamyl-tRNA(Gln) + L-glutamine + ATP + H2O = L-glutaminyl-tRNA(Gln) + L-glutamate + ADP + phosphate + H(+). The catalysed reaction is L-aspartyl-tRNA(Asn) + L-glutamine + ATP + H2O = L-asparaginyl-tRNA(Asn) + L-glutamate + ADP + phosphate + 2 H(+). In terms of biological role, allows the formation of correctly charged Asn-tRNA(Asn) or Gln-tRNA(Gln) through the transamidation of misacylated Asp-tRNA(Asn) or Glu-tRNA(Gln) in organisms which lack either or both of asparaginyl-tRNA or glutaminyl-tRNA synthetases. The reaction takes place in the presence of glutamine and ATP through an activated phospho-Asp-tRNA(Asn) or phospho-Glu-tRNA(Gln). In Neisseria meningitidis serogroup C (strain 053442), this protein is Aspartyl/glutamyl-tRNA(Asn/Gln) amidotransferase subunit B.